The primary structure comprises 488 residues: Ribulose bisphosphate carboxylase large chain (488 aa).

The substrate site is built by Asn128 and Thr178. Lys180 serves as the catalytic Proton acceptor. Lys182 lines the substrate pocket. 3 residues coordinate Mg(2+): Lys206, Asp208, and Glu209. Lys206 is modified (N6-carboxylysine). Residue His298 is the Proton acceptor of the active site. Positions 299, 331, and 383 each coordinate substrate.

The protein belongs to the RuBisCO large chain family. Type I subfamily. In terms of assembly, heterohexadecamer of 8 large chains and 8 small chains. Mg(2+) is required as a cofactor.

The enzyme catalyses 2 (2R)-3-phosphoglycerate + 2 H(+) = D-ribulose 1,5-bisphosphate + CO2 + H2O. It catalyses the reaction D-ribulose 1,5-bisphosphate + O2 = 2-phosphoglycolate + (2R)-3-phosphoglycerate + 2 H(+). Its function is as follows. RuBisCO catalyzes two reactions: the carboxylation of D-ribulose 1,5-bisphosphate, the primary event in carbon dioxide fixation, as well as the oxidative fragmentation of the pentose substrate. Both reactions occur simultaneously and in competition at the same active site. In Variovorax paradoxus (strain S110), this protein is Ribulose bisphosphate carboxylase large chain.